Reading from the N-terminus, the 159-residue chain is Cyclic pyranopterin monophosphate synthase (159 aa).

Substrate is bound by residues 75–77 and 113–114; these read LCH and ME. Residue Asp-128 is part of the active site.

The protein belongs to the MoaC family. In terms of assembly, homohexamer; trimer of dimers.

It carries out the reaction (8S)-3',8-cyclo-7,8-dihydroguanosine 5'-triphosphate = cyclic pyranopterin phosphate + diphosphate. It participates in cofactor biosynthesis; molybdopterin biosynthesis. Functionally, catalyzes the conversion of (8S)-3',8-cyclo-7,8-dihydroguanosine 5'-triphosphate to cyclic pyranopterin monophosphate (cPMP). The chain is Cyclic pyranopterin monophosphate synthase from Photorhabdus laumondii subsp. laumondii (strain DSM 15139 / CIP 105565 / TT01) (Photorhabdus luminescens subsp. laumondii).